Consider the following 34-residue polypeptide: Trypsin inhibitor (34 aa).

Disulfide bonds link C7-C29 and C11-C25.

It is found in the secreted. Functionally, inhibits trypsin. The chain is Trypsin inhibitor from Veronica hederifolia (Ivy-leaved speedwell).